We begin with the raw amino-acid sequence, 271 residues long: Phosphoribosylformylglycinamidine synthase subunit PurQ (271 aa).

A Glutamine amidotransferase type-1 domain is found at 7–253 (KVAVLRMEGT…FGYQVGRREG (247 aa)). C104 (nucleophile) is an active-site residue. Active-site residues include H238 and E240.

In terms of assembly, part of the FGAM synthase complex composed of 1 PurL, 1 PurQ and 2 PurS subunits.

Its subcellular location is the cytoplasm. It carries out the reaction N(2)-formyl-N(1)-(5-phospho-beta-D-ribosyl)glycinamide + L-glutamine + ATP + H2O = 2-formamido-N(1)-(5-O-phospho-beta-D-ribosyl)acetamidine + L-glutamate + ADP + phosphate + H(+). The enzyme catalyses L-glutamine + H2O = L-glutamate + NH4(+). Its pathway is purine metabolism; IMP biosynthesis via de novo pathway; 5-amino-1-(5-phospho-D-ribosyl)imidazole from N(2)-formyl-N(1)-(5-phospho-D-ribosyl)glycinamide: step 1/2. In terms of biological role, part of the phosphoribosylformylglycinamidine synthase complex involved in the purines biosynthetic pathway. Catalyzes the ATP-dependent conversion of formylglycinamide ribonucleotide (FGAR) and glutamine to yield formylglycinamidine ribonucleotide (FGAM) and glutamate. The FGAM synthase complex is composed of three subunits. PurQ produces an ammonia molecule by converting glutamine to glutamate. PurL transfers the ammonia molecule to FGAR to form FGAM in an ATP-dependent manner. PurS interacts with PurQ and PurL and is thought to assist in the transfer of the ammonia molecule from PurQ to PurL. This Archaeoglobus fulgidus (strain ATCC 49558 / DSM 4304 / JCM 9628 / NBRC 100126 / VC-16) protein is Phosphoribosylformylglycinamidine synthase subunit PurQ.